A 38-amino-acid polypeptide reads, in one-letter code: Large ribosomal subunit protein bL36 (38 aa).

It belongs to the bacterial ribosomal protein bL36 family.

This Hamiltonella defensa subsp. Acyrthosiphon pisum (strain 5AT) protein is Large ribosomal subunit protein bL36.